We begin with the raw amino-acid sequence, 382 residues long: 3-ketosteroid-9-alpha-monooxygenase, oxygenase component (382 aa).

One can recognise a Rieske domain in the interval 20 to 122; sequence WHCLGLSRTF…TMEKHGQLFV (103 aa). Cys61, His63, Cys80, and His83 together coordinate [2Fe-2S] cluster. Fe cation-binding residues include Asn169, His175, His180, and Asp298.

As to quaternary structure, homotrimer. The two-component system 3-ketosteroid-9-alpha-monooxygenase is composed of an oxygenase component KshA and a reductase component KshB. [2Fe-2S] cluster is required as a cofactor. The cofactor is Fe cation.

The catalysed reaction is androsta-1,4-diene-3,17-dione + 2 reduced [2Fe-2S]-[ferredoxin] + O2 + 2 H(+) = 9alpha-hydroxyandrosta-1,4-diene-3,17-dione + 2 oxidized [2Fe-2S]-[ferredoxin] + H2O. Its function is as follows. In vitro, catalyzes the introduction of a 9alpha-hydroxyl moiety into the ring B of 3-ketosteroid substrates such as 1,4-androstadiene-3,17-dione (ADD), 4-androstene-3,17-dione (AD), 4-androstene-17beta-ol-3-one (testosterone), 4-pregnene-3,20-dione (progesterone), 23,24-bisnorcholesta-4-ene-22-oate and 23,24-bisnorcholesta-1,4-diene-22-oate. This is 3-ketosteroid-9-alpha-monooxygenase, oxygenase component from Rhodococcus rhodochrous.